A 216-amino-acid chain; its full sequence is 3-isopropylmalate dehydratase small subunit (216 aa).

The protein belongs to the LeuD family. LeuD type 1 subfamily. In terms of assembly, heterodimer of LeuC and LeuD.

The catalysed reaction is (2R,3S)-3-isopropylmalate = (2S)-2-isopropylmalate. The protein operates within amino-acid biosynthesis; L-leucine biosynthesis; L-leucine from 3-methyl-2-oxobutanoate: step 2/4. Catalyzes the isomerization between 2-isopropylmalate and 3-isopropylmalate, via the formation of 2-isopropylmaleate. This is 3-isopropylmalate dehydratase small subunit from Albidiferax ferrireducens (strain ATCC BAA-621 / DSM 15236 / T118) (Rhodoferax ferrireducens).